An 86-amino-acid chain; its full sequence is Large ribosomal subunit protein bL31B (86 aa).

The protein belongs to the bacterial ribosomal protein bL31 family. Type B subfamily. In terms of assembly, part of the 50S ribosomal subunit.

The sequence is that of Large ribosomal subunit protein bL31B from Yersinia pseudotuberculosis serotype O:1b (strain IP 31758).